A 105-amino-acid chain; its full sequence is Large ribosomal subunit protein uL24 (105 aa).

This sequence belongs to the universal ribosomal protein uL24 family. As to quaternary structure, part of the 50S ribosomal subunit.

One of two assembly initiator proteins, it binds directly to the 5'-end of the 23S rRNA, where it nucleates assembly of the 50S subunit. Functionally, one of the proteins that surrounds the polypeptide exit tunnel on the outside of the subunit. This Xanthobacter autotrophicus (strain ATCC BAA-1158 / Py2) protein is Large ribosomal subunit protein uL24.